The primary structure comprises 170 residues: Extracellular globin-3 (170 aa).

Residues 1-17 form the signal peptide; the sequence is MLRQLLVLVGLAVVCLA. Positions 23-169 constitute a Globin domain; it reads CCSEEDHRIV…ILTKISSRLN (147 aa). Residues Cys24 and Cys156 are joined by a disulfide bond. Heme b is bound at residue His119.

Belongs to the globin family. In terms of assembly, the extracellular hemoglobin of the earthworm consists of 12 subunits that have a hexagonal bilayer structure with a molecular weight near 3.8 million. Each one-twelfth subunit is composed primarily of disulfide linked trimers (chains A, B, and C) and monomers (chain D).

Its subcellular location is the secreted. This Lumbricus terrestris (Common earthworm) protein is Extracellular globin-3.